We begin with the raw amino-acid sequence, 313 residues long: MALLVDRVRGHWRIAAGLLFNLLVSICIVFLNKWIYVYHGFPNMSLTLVHFVVTWLGLYICQKLDIFAPKSLPPSRLLLLALSFCGFVVFTNLSLQNNTIGTYQLAKAMTTPVIIAIQTFCYQKTFSTRIQLTLIPITLGVILNSYYDVKFNFLGMVFAALGVLVTSLYQVWVGAKQHELQVNSMQLLYYQAPMSSAMLLVAVPFFEPVFGEGGIFGPWSVSALLMVLLSGVIAFMVNLSIYWIIGNTSPVTYNMFGHFKFCITLFGGYVLFKDPLSINQALGILCTLFGILAYTHFKLSEQEGSRSKLAQRP.

9 helical membrane-spanning segments follow: residues 17–37 (GLLFNLLVSICIVFLNKWIYV), 40–60 (GFPNMSLTLVHFVVTWLGLYI), 77–97 (LLLLALSFCGFVVFTNLSLQN), 126–143 (FSTRIQLTLIPITLGVIL), 153–173 (FLGMVFAALGVLVTSLYQVWV), 187–206 (LLYYQAPMSSAMLLVAVPFF), 225–245 (LMVLLSGVIAFMVNLSIYWII), 252–272 (TYNMFGHFKFCITLFGGYVLF), and 275–295 (PLSINQALGILCTLFGILAYT).

Belongs to the TPT transporter family. SLC35E subfamily.

The protein resides in the membrane. Its function is as follows. Putative transporter. This Homo sapiens (Human) protein is Solute carrier family 35 member E3 (SLC35E3).